Reading from the N-terminus, the 340-residue chain is Phospho-N-acetylmuramoyl-pentapeptide-transferase (340 aa).

10 helical membrane-spanning segments follow: residues 5-25 (FILS…HLIN), 50-70 (TPTM…IIWT), 73-93 (SNPY…IGFI), 113-133 (FSLL…IIND), 147-167 (IIFN…IGTS), 178-198 (GLAI…SFIS), 218-238 (LTII…FNTY), 242-262 (IFMG…ISVL), 267-287 (ILLI…IIQV), and 318-338 (IIRF…MLKV).

This sequence belongs to the glycosyltransferase 4 family. MraY subfamily. The cofactor is Mg(2+).

It is found in the cell membrane. The catalysed reaction is UDP-N-acetyl-alpha-D-muramoyl-L-alanyl-gamma-D-glutamyl-meso-2,6-diaminopimeloyl-D-alanyl-D-alanine + di-trans,octa-cis-undecaprenyl phosphate = di-trans,octa-cis-undecaprenyl diphospho-N-acetyl-alpha-D-muramoyl-L-alanyl-D-glutamyl-meso-2,6-diaminopimeloyl-D-alanyl-D-alanine + UMP. The protein operates within cell wall biogenesis; peptidoglycan biosynthesis. Catalyzes the initial step of the lipid cycle reactions in the biosynthesis of the cell wall peptidoglycan: transfers peptidoglycan precursor phospho-MurNAc-pentapeptide from UDP-MurNAc-pentapeptide onto the lipid carrier undecaprenyl phosphate, yielding undecaprenyl-pyrophosphoryl-MurNAc-pentapeptide, known as lipid I. This chain is Phospho-N-acetylmuramoyl-pentapeptide-transferase, found in Buchnera aphidicola subsp. Baizongia pistaciae (strain Bp).